The following is a 743-amino-acid chain: Probable TonB-dependent siderophore receptor PiuA (743 aa).

The first 28 residues, 1–28, serve as a signal peptide directing secretion; it reads MSLIRTRKKIVSSAIASSLSMIATTAMA. A TBDR plug domain is found at 61–167; sequence PLLDTPKSVS…VGGSINMISK (107 aa). In terms of domain architecture, TBDR beta-barrel spans 172 to 743; that stretch reads GDFLEGSVAA…SAVLAVNFKY (572 aa). 2 disulfides stabilise this stretch: Cys408-Cys416 and Cys627-Cys632.

This sequence belongs to the TonB-dependent receptor family.

The protein resides in the cell outer membrane. Its function is as follows. Probably involved in the initial step of iron uptake by binding iron chelating siderophores, thereby allowing extraction of iron from the environment. May bind the siderophore, ferric enterobactin, with micromolar affinity. This chain is Probable TonB-dependent siderophore receptor PiuA, found in Acinetobacter baumannii (strain ATCC 19606 / DSM 30007 / JCM 6841 / CCUG 19606 / CIP 70.34 / NBRC 109757 / NCIMB 12457 / NCTC 12156 / 81).